A 267-amino-acid chain; its full sequence is Phosphatidylglycerol--prolipoprotein diacylglyceryl transferase (267 aa).

The next 3 membrane-spanning stretches (helical) occupy residues 18–38, 57–77, and 95–115; these read LSVR…MWFA, FLFY…VLFY, and GGMS…IFAW. An a 1,2-diacyl-sn-glycero-3-phospho-(1'-sn-glycerol)-binding site is contributed by Arg-140. Transmembrane regions (helical) follow at residues 173–193, 200–220, and 233–253; these read SQLY…QWFI, GSVA…IEYF, and FISM…GLLI.

This sequence belongs to the Lgt family.

The protein resides in the cell inner membrane. It catalyses the reaction L-cysteinyl-[prolipoprotein] + a 1,2-diacyl-sn-glycero-3-phospho-(1'-sn-glycerol) = an S-1,2-diacyl-sn-glyceryl-L-cysteinyl-[prolipoprotein] + sn-glycerol 1-phosphate + H(+). The protein operates within protein modification; lipoprotein biosynthesis (diacylglyceryl transfer). Catalyzes the transfer of the diacylglyceryl group from phosphatidylglycerol to the sulfhydryl group of the N-terminal cysteine of a prolipoprotein, the first step in the formation of mature lipoproteins. The sequence is that of Phosphatidylglycerol--prolipoprotein diacylglyceryl transferase from Pseudoalteromonas translucida (strain TAC 125).